A 270-amino-acid chain; its full sequence is Tetraspanin-17 (270 aa).

The Cytoplasmic portion of the chain corresponds to 1–19; it reads MPGKHQQFQDPEVGCCGKY. The chain crosses the membrane as a helical span at residues 20-40; it reads FLFGFNIVFWVLGALFLAIGL. Over 41-63 the chain is Extracellular; that stretch reads WAWGEKGVLSNISALTDLGGLDP. The N-linked (GlcNAc...) asparagine glycan is linked to Asn51. The helical transmembrane segment at 64-84 threads the bilayer; the sequence is VWLFVVVGGVMSVLGFAGCIG. Over 85–94 the chain is Cytoplasmic; it reads ALRENTFLLK. The chain crosses the membrane as a helical span at residues 95–115; sequence FFSVFLGLIFFLELAAGILAF. Topologically, residues 116-234 are extracellular; it reads VFKDWIRDQL…GQFEKWLQDN (119 aa). Cystine bridges form between Cys155–Cys223, Cys156–Cys188, Cys172–Cys182, and Cys189–Cys202. Asn171 carries N-linked (GlcNAc...) asparagine glycosylation. The helical transmembrane segment at 235-255 threads the bilayer; that stretch reads LIVVAGVLVGIALLQIFGLCL. At 256–270 the chain is on the cytoplasmic side; sequence AQNLVSDIKAVKANW.

It belongs to the tetraspanin (TM4SF) family. In terms of assembly, interacts with ADAM10; the interaction influences ADAM10 substrate specificity, endocytosis and turnover.

The protein resides in the cell membrane. Part of TspanC8 subgroup, composed of 6 members that interact with the transmembrane metalloprotease ADAM10. This interaction is required for ADAM10 exit from the endoplasmic reticulum and for enzymatic maturation and trafficking to the cell surface as well as substrate specificity. Different TspanC8/ADAM10 complexes have distinct substrates. Seems to regulate VE-cadherin expression in endothelial cells probably through interaction with ADAM10, promoting leukocyte transmigration. The polypeptide is Tetraspanin-17 (Tspan17) (Mus musculus (Mouse)).